The following is a 197-amino-acid chain: MNRKTGTTTVGIRVKDGVILAADTQASLDHMVETLNIRKIIPITDRIAITTAGSVGDVQMIARILEAEARYYQFTWGRPMTTRAMANLLSNILNENKWFPYLVQIIIGGYVDEPTIANLDPLGGLIFDDYTATGSGTPFAIAILEEGYRKNLGIEKAKELAIKAVKAAGARDVYTGSKKIQVVTITKDGMKEEFVTL.

The propeptide at Met1–Gly6 is removed in mature form; by autocatalysis. Catalysis depends on Thr7, which acts as the Nucleophile.

Belongs to the peptidase T1B family. As to quaternary structure, the 20S proteasome core is composed of 14 alpha and 14 beta subunits that assemble into four stacked heptameric rings, resulting in a barrel-shaped structure. The two inner rings, each composed of seven catalytic beta subunits, are sandwiched by two outer rings, each composed of seven alpha subunits. The catalytic chamber with the active sites is on the inside of the barrel. Has a gated structure, the ends of the cylinder being occluded by the N-termini of the alpha-subunits. Is capped at one or both ends by the proteasome regulatory ATPase, PAN.

The protein localises to the cytoplasm. It catalyses the reaction Cleavage of peptide bonds with very broad specificity.. Its activity is regulated as follows. The formation of the proteasomal ATPase PAN-20S proteasome complex, via the docking of the C-termini of PAN into the intersubunit pockets in the alpha-rings, triggers opening of the gate for substrate entry. Interconversion between the open-gate and close-gate conformations leads to a dynamic regulation of the 20S proteasome proteolysis activity. Its function is as follows. Component of the proteasome core, a large protease complex with broad specificity involved in protein degradation. The sequence is that of Proteasome subunit beta 1 from Pyrococcus abyssi (strain GE5 / Orsay).